We begin with the raw amino-acid sequence, 345 residues long: Uroporphyrinogen decarboxylase (345 aa).

Substrate-binding positions include 27–31, D77, Y152, S207, and H323; that span reads RQAGR.

The protein belongs to the uroporphyrinogen decarboxylase family. In terms of assembly, homodimer.

It localises to the cytoplasm. The enzyme catalyses uroporphyrinogen III + 4 H(+) = coproporphyrinogen III + 4 CO2. The protein operates within porphyrin-containing compound metabolism; protoporphyrin-IX biosynthesis; coproporphyrinogen-III from 5-aminolevulinate: step 4/4. Its function is as follows. Catalyzes the decarboxylation of four acetate groups of uroporphyrinogen-III to yield coproporphyrinogen-III. The sequence is that of Uroporphyrinogen decarboxylase from Maricaulis maris (strain MCS10) (Caulobacter maris).